The chain runs to 161 residues: Putative 4-hydroxy-4-methyl-2-oxoglutarate aldolase (161 aa).

Substrate contacts are provided by residues 78-81 (GDVI) and arginine 100. Residue aspartate 101 participates in a divalent metal cation binding.

The protein belongs to the class II aldolase/RraA-like family. As to quaternary structure, homotrimer. It depends on a divalent metal cation as a cofactor.

It carries out the reaction 4-hydroxy-4-methyl-2-oxoglutarate = 2 pyruvate. It catalyses the reaction oxaloacetate + H(+) = pyruvate + CO2. Its function is as follows. Catalyzes the aldol cleavage of 4-hydroxy-4-methyl-2-oxoglutarate (HMG) into 2 molecules of pyruvate. Also contains a secondary oxaloacetate (OAA) decarboxylase activity due to the common pyruvate enolate transition state formed following C-C bond cleavage in the retro-aldol and decarboxylation reactions. The sequence is that of Putative 4-hydroxy-4-methyl-2-oxoglutarate aldolase from Mycobacterium avium (strain 104).